We begin with the raw amino-acid sequence, 782 residues long: Acetazolamide conferring resistance protein zam (782 aa).

One can recognise an RNB domain in the interval 270 to 579; it reads EVALSLESQA…QRLLKLVLTE (310 aa). Residues 655–736 form the S1 motif domain; the sequence is GEIFRGLITG…YRQQIDLGAV (82 aa). The disordered stretch occupies residues 737 to 782; the sequence is NNAPKDSANMDFDDDDEDGDEREEQDTMDWDAMEDGDDDEGGAVIF. The span at 747–782 shows a compositional bias: acidic residues; that stretch reads DFDDDDEDGDEREEQDTMDWDAMEDGDDDEGGAVIF.

It belongs to the RNR ribonuclease family.

In terms of biological role, not known; control resistance to the carbonic anhydrase inhibitor acetazolamide. In Synechocystis sp. (strain ATCC 27184 / PCC 6803 / Kazusa), this protein is Acetazolamide conferring resistance protein zam (zam).